The chain runs to 315 residues: Olfactory receptor 10H2 (315 aa).

The Extracellular segment spans residues 1–25; that stretch reads MLGLNHTSMSEFILVGFSAFPHLQL. Asn5 carries N-linked (GlcNAc...) asparagine glycosylation. The helical transmembrane segment at 26 to 46 threads the bilayer; the sequence is MLFLLFLLMYLFTLLGNLLIM. Residues 47 to 54 lie on the Cytoplasmic side of the membrane; it reads ATVWSERS. The chain crosses the membrane as a helical span at residues 55-75; that stretch reads LHTPMYLFLCVLSVSEILYTV. At 76 to 99 the chain is on the extracellular side; the sequence is AIIPRMLADLLSTQRSIAFLACAS. Cysteines 97 and 189 form a disulfide. The helical transmembrane segment at 100–120 threads the bilayer; it reads QMFFSFSFGFTHSFLLTVMGY. Topologically, residues 121 to 139 are cytoplasmic; that stretch reads DRYVAICHPLRYNVLMSPR. A helical membrane pass occupies residues 140–160; the sequence is GCACLVGCSWAGGSVMGMVVT. At 161–197 the chain is on the extracellular side; the sequence is SAIFQLTFCGSHEIQHFLCHVPPLLKLACGNNVPAVA. The chain crosses the membrane as a helical span at residues 198-218; that stretch reads LGVGLVCIMALLGCFLLILLS. Over 219-238 the chain is Cytoplasmic; the sequence is YAFIVADILKIPSAEGRNKA. Residues 239–259 form a helical membrane-spanning segment; that stretch reads FSTCASHLIVVIVHYGFASVI. The Extracellular portion of the chain corresponds to 260–272; sequence YLKPKGPHSQEGD. The chain crosses the membrane as a helical span at residues 273–293; the sequence is TLMATTYAVLTPFLSPIIFSL. Residues 294 to 315 lie on the Cytoplasmic side of the membrane; sequence RNKELKVAMKRTFLSTLYSSGT.

This sequence belongs to the G-protein coupled receptor 1 family.

Its subcellular location is the cell membrane. In terms of biological role, odorant receptor. This is Olfactory receptor 10H2 (OR10H2) from Homo sapiens (Human).